The chain runs to 105 residues: UPF0145 protein Aflv_1588 (105 aa).

It belongs to the UPF0145 family.

This Anoxybacillus flavithermus (strain DSM 21510 / WK1) protein is UPF0145 protein Aflv_1588.